Reading from the N-terminus, the 103-residue chain is Small ribosomal subunit protein uS10 (103 aa).

The protein belongs to the universal ribosomal protein uS10 family. In terms of assembly, part of the 30S ribosomal subunit.

Involved in the binding of tRNA to the ribosomes. This chain is Small ribosomal subunit protein uS10, found in Shewanella frigidimarina (strain NCIMB 400).